A 311-amino-acid chain; its full sequence is Olfactory receptor 5M8 (311 aa).

At 1–24 (MRRNCTLVTEFILLGLTSRRELQI) the chain is on the extracellular side. The N-linked (GlcNAc...) asparagine glycan is linked to asparagine 4. A helical membrane pass occupies residues 25–45 (LLFTLFLAIYMVTVAGNLGMI). The Cytoplasmic portion of the chain corresponds to 46-53 (VLIQANAW). A helical membrane pass occupies residues 54–74 (LHMPMYFFLSHLSFVDLCFSS). The Extracellular portion of the chain corresponds to 75–98 (NVTPKMLEIFLSEKKSISYPACLV). A disulfide bridge links cysteine 96 with cysteine 188. Residues 99 to 119 (QCYLFIALVHVEIYILAVMAF) traverse the membrane as a helical segment. At 120 to 138 (DRYMAICNPLLYGSRMSKS) the chain is on the cytoplasmic side. The helical transmembrane segment at 139-159 (VCSFLITVPYVYGALTGLMET) threads the bilayer. The Extracellular portion of the chain corresponds to 160-195 (MWTYNLAFCGPNEINHFYCADPPLIKLACSDTYNKE). Residues 196-216 (LSMFIVAGWNLSFSLFIICIS) form a helical membrane-spanning segment. Residues 217–236 (YLYIFPAILKIRSTEGRQKA) lie on the Cytoplasmic side of the membrane. Residues 237–257 (FSTCGSHLTAVTIFYATLFFM) traverse the membrane as a helical segment. Residues 258–270 (YLRPPSKESVEQG) lie on the Extracellular side of the membrane. Residues 271–291 (KMVAVFYTTVIPMLNLIIYSL) traverse the membrane as a helical segment. Residues 292 to 311 (RNKNVKEALIKELSMKIYFS) are Cytoplasmic-facing.

The protein belongs to the G-protein coupled receptor 1 family.

It is found in the cell membrane. Its function is as follows. Odorant receptor. The chain is Olfactory receptor 5M8 (OR5M8) from Homo sapiens (Human).